The following is a 252-amino-acid chain: 3-dehydroquinate dehydratase (252 aa).

3-dehydroquinate-binding positions include S21, 46–48 (EWR), and R82. H143 (proton donor/acceptor) is an active-site residue. The active-site Schiff-base intermediate with substrate is the K170. Positions 213, 232, and 236 each coordinate 3-dehydroquinate.

It belongs to the type-I 3-dehydroquinase family. As to quaternary structure, homodimer.

It carries out the reaction 3-dehydroquinate = 3-dehydroshikimate + H2O. It functions in the pathway metabolic intermediate biosynthesis; chorismate biosynthesis; chorismate from D-erythrose 4-phosphate and phosphoenolpyruvate: step 3/7. Functionally, involved in the third step of the chorismate pathway, which leads to the biosynthesis of aromatic amino acids. Catalyzes the cis-dehydration of 3-dehydroquinate (DHQ) and introduces the first double bond of the aromatic ring to yield 3-dehydroshikimate. The sequence is that of 3-dehydroquinate dehydratase from Shigella dysenteriae serotype 1 (strain Sd197).